The sequence spans 380 residues: Hydrogenase maturation factor HypD1 (380 aa).

The Fe cation site is built by C36, C64, and C67.

Belongs to the HypD family. The cofactor is [4Fe-4S] cluster.

The protein operates within protein modification; [NiFe] hydrogenase maturation. Involved in the maturation of [NiFe] hydrogenases. Involved in the biosynthesis of the Fe(CN)(2)CO cofactor. The protein is Hydrogenase maturation factor HypD1 (hypD1) of Bradyrhizobium diazoefficiens (strain JCM 10833 / BCRC 13528 / IAM 13628 / NBRC 14792 / USDA 110).